Reading from the N-terminus, the 354-residue chain is Zinc finger protein 346 (354 aa).

Matrin-type zinc fingers lie at residues 34-64 (TQCKVCSAVLISESQKLAHYQSRKHANKVRR), 95-125 (KCCPICNMTFSSPVVAESHYSGKTHIKNLRL), 165-195 (KFCKLCHATFNNPLMAEQHYAGKKHKKQETK), and 232-262 (FSCDTCNIVLNSIEQYQAHVSGAKHKNQLMS). Zn(2+)-binding residues include C36, C39, H52, H58, C97, C100, H113, and H119. Residues 263 to 343 (MTPLSKEGPP…QPYVREDMMG (81 aa)) form a disordered region. Low complexity-rich tracts occupy residues 270-289 (GPPAAGGPSALAGPPSTGGA) and 310-323 (GPSSFGGLPPMGGL). Residues 324–333 (MPPPYPPPHS) are compositionally biased toward pro residues.

Its subcellular location is the nucleus. It localises to the cytoplasm. Binds preferentially to dsRNA, but also to RNA-DNA hybrids. The sequence is that of Zinc finger protein 346 from Xenopus tropicalis (Western clawed frog).